The primary structure comprises 959 residues: Ataxin-2 homolog (959 aa).

Residues 13–92 (DVLSAINDMI…IVDFAYVTQE (80 aa)) enclose the Sm domain. 5 disordered regions span residues 203–378 (AREI…GSRV), 392–484 (TAPK…SVIT), 501–528 (PRVA…HPAM), 697–831 (PPQG…QHIQ), and 867–959 (PMQQ…QSPP). A compositionally biased stretch (basic and acidic residues) spans 226-235 (DLDKITRQED). The segment covering 246-260 (NNSFNQQQQQRRNPN) has biased composition (low complexity). Positions 270 to 281 (RRAEGLRGDRRN) are enriched in basic and acidic residues. The span at 282–313 (SGSSSANNSRYGAPAAAQQNYSQNQQQQQGQK) shows a compositional bias: low complexity. Polar residues-rich tracts occupy residues 341-356 (RQQQ…NNNV) and 473-484 (VSVTSENDSVIT). Low complexity-rich tracts occupy residues 504-528 (APAT…HPAM), 697-707 (PPQGQQQQPRY), and 715-725 (QQQQQQPQQQQ). 2 stretches are compositionally biased toward polar residues: residues 726–742 (FSGE…SQPT) and 756–765 (APQNGNMQAE). The segment covering 766–788 (SSSNASHSGSTSSQSGQRSGSPP) has biased composition (low complexity). Positions 789-798 (GAVPPPPPPQ) are enriched in pro residues. Composition is skewed to low complexity over residues 822 to 831 (MMQQQQQHIQ), 867 to 876 (PMQQNQHPQQ), and 902 to 911 (QQQQQQQQQQ). Polar residues predominate over residues 912–922 (MHRQNSLPQQF). Low complexity predominate over residues 923-935 (QGNQGVNPSGQQS). Positions 948 to 959 (TPRDQQHSQSPP) are enriched in polar residues.

This sequence belongs to the ataxin-2 family. In terms of assembly, interacts (via C-terminus) with szy-20 (via C-terminus); the interaction is RNA independent. Interacts with pab-1. Interacts with gdi-1. In terms of tissue distribution, expressed in the central nervous system, dorsal and ventral nerve cord, intestinal lining and body-wall muscle. Expressed in the gonad.

It is found in the cytoplasm. Its subcellular location is the nucleus. Its function is as follows. Probable RNA-binding protein that negatively regulates the translation of targets. Functions with RNA-binding protein szy-20 to ensure embryonic cell division, and to this end, plays a role in the regulation of centrosome assembly, position and size, and in astral microtubule outgrowth and nucleation. Required for gonad development, germ cell proliferation and for the production of oocytes. Regulates whole body growth and fat accumulation in response to food availability, and this may be through the mTOR pathway, upstream of daf-15 and rheb-1. This chain is Ataxin-2 homolog, found in Caenorhabditis elegans.